A 269-amino-acid chain; its full sequence is Proline-rich protein 7 (269 aa).

Residues 1 to 9 (MVMSQGTYT) lie on the Extracellular side of the membrane. The required for interaction with NMDA receptors stretch occupies residues 1–44 (MVMSQGTYTFLTCFAGFWLIWGLIVLLCCFCSFLRRRLKRRQEE). Residues 2-39 (VMSQGTYTFLTCFAGFWLIWGLIVLLCCFCSFLRRRLK) are required for membrane localization. The chain crosses the membrane as a helical; Signal-anchor for type III membrane protein span at residues 10 to 30 (FLTCFAGFWLIWGLIVLLCCF). Topologically, residues 31 to 269 (CSFLRRRLKR…IPLFGRTTAV (239 aa)) are cytoplasmic. Disordered stretches follow at residues 63–83 (GSLA…RSRL) and 97–121 (PLLH…PHPP). A Phosphoserine modification is found at serine 64. The span at 108–117 (AHPHPHHHAL) shows a compositional bias: basic residues. Residues 146-166 (PCYEEAVLMAEPPPPYSEVLT) form a required for internalization region. The interval 146–269 (PCYEEAVLMA…IPLFGRTTAV (124 aa)) is required for apoptosis induction. The PDZ-binding signature appears at 267 to 269 (TAV).

Forms a complex with NMDA receptor zeta subunit GRIN1 and epsilon subunit GRIN2B. Interacts with GRIN2B. Interacts with GRIN1; the interaction is reduced upon NMDA receptor activity. Found in a postsynaptic membrane complex with DLG4 and GRIN1. Interacts with DLG4 (via PDZ3 domain and to lesser degree via PDZ2 domain). Interacts with JUN. Found in a complex with JUN and FBXW7. Interacts with JUN and FBXW7; the interaction inhibits ubiquitination-mediated JUN degradation promoting its phosphorylation and transcriptional activity. Interacts with SRC. Palmitoylated. In terms of processing, tyrosine phosphorylated, possibly by SRC. As to expression, highly expressed in brain, moderately expressed in lymph nodes and T cells and low expression in thymus and spleen. Expressed in single positive progenitor thymocytes, particularly in CD8 single positive thymocytes.

Its subcellular location is the cell membrane. It is found in the postsynaptic cell membrane. It localises to the postsynaptic density membrane. The protein resides in the cytoplasm. The protein localises to the perinuclear region. Its subcellular location is the synapse. It is found in the cell projection. It localises to the dendrite. The protein resides in the nucleus. In terms of biological role, acts as a synapse-to-nucleus messenger to promote NMDA receptor-mediated excitotoxicity in neurons in a JUN-dependent manner. Inhibits ubiquitination-mediated degradation and promotes phosphorylation and transcriptional activity of transcription factor JUN. Might play a redundant role in the regulation of T cell receptor signaling. Might promote apoptosis in T cells. This Mus musculus (Mouse) protein is Proline-rich protein 7 (Prr7).